The chain runs to 212 residues: Abscisic acid receptor PYL10 (212 aa).

The interval 34–191 is START-like; that stretch reads YAVGPGQCSS…NLQKLKSVSE (158 aa). Residues lysine 70, 107–112, 134–140, and glutamate 156 each bind abscisate; these read ASTSTE and RLRNYRS. The Gate loop motif lies at 103 to 107; that stretch reads SGLPA. Positions 133 to 135 match the Latch loop motif; sequence HRL.

This sequence belongs to the PYR/PYL/RCAR abscisic acid intracellular receptor family. As to quaternary structure, homodimer. Interacts with PP2C53. Binding to PP2C53 is dependent on the presence of abscisic acid (ABA). Interacts with PP2C50. Binding to PP2C50 is dependent on the presence of ABA.

Its subcellular location is the cytoplasm. The protein resides in the cytosol. It localises to the nucleus. Its function is as follows. Inhibits the protein phosphatases PP2C06 and PP2C09 when activated by abscisic acid (ABA). Together with PP2C53, SAPK8 and SAPK10, may form an ABA signaling module involved in stress response. This Oryza sativa subsp. japonica (Rice) protein is Abscisic acid receptor PYL10.